Consider the following 439-residue polypeptide: UDP-N-acetylmuramoylalanine--D-glutamate ligase (439 aa).

An ATP-binding site is contributed by 112 to 118 (GSNGKST).

The protein belongs to the MurCDEF family.

Its subcellular location is the cytoplasm. The catalysed reaction is UDP-N-acetyl-alpha-D-muramoyl-L-alanine + D-glutamate + ATP = UDP-N-acetyl-alpha-D-muramoyl-L-alanyl-D-glutamate + ADP + phosphate + H(+). It functions in the pathway cell wall biogenesis; peptidoglycan biosynthesis. In terms of biological role, cell wall formation. Catalyzes the addition of glutamate to the nucleotide precursor UDP-N-acetylmuramoyl-L-alanine (UMA). This chain is UDP-N-acetylmuramoylalanine--D-glutamate ligase, found in Mannheimia succiniciproducens (strain KCTC 0769BP / MBEL55E).